Reading from the N-terminus, the 100-residue chain is Cell division protein FtsB (100 aa).

At 1–3 (MKW) the chain is on the cytoplasmic side. The helical transmembrane segment at 4–21 (LAIILVVALLALQYRLWM) threads the bilayer. The Periplasmic segment spans residues 22 to 100 (GEGSIASVVS…TDKDTKKNKK (79 aa)). Residues 26–73 (IASVVSLNREIAKQKEENARLRERNRLLAAEVDALKQGKDAIEERARN) adopt a coiled-coil conformation.

Belongs to the FtsB family. Part of a complex composed of FtsB, FtsL and FtsQ.

It localises to the cell inner membrane. Essential cell division protein. May link together the upstream cell division proteins, which are predominantly cytoplasmic, with the downstream cell division proteins, which are predominantly periplasmic. The polypeptide is Cell division protein FtsB (Saccharophagus degradans (strain 2-40 / ATCC 43961 / DSM 17024)).